An 867-amino-acid chain; its full sequence is MSSLDPSPATSTQQQKQLESLVNLLTQGSRFYRKAYNELFSGVTTEQDPDSSTNIPEYMLFGWHLFLMLHLRSPELFKDLVSCIHGLVAVLAILLIHVPAKFRSFTIEGSSHLIKQTEKGVDLIASLCHNYHTSEERLKEMLHKSHNAIEDIFHMKALSASECKPENLDKIDTDDLMYFKGLIDMECFQSNLEKMEKLCNSNSCKGELDFKSILINNDYIPYDENSTGDSTNLGHSKCAFETLASPTKTIKNMLTVPSSPLSPATGGSVKIVQMTPVTSAMTTAKWLREVISSLPDKPSSKLQQFLSSCDRDLTNAVTERVSIVLEAIFPTKSSANRGVSLGLNCANAFDIPWAEARKVEASKLYYRVLEAICRAELQNSNVNNLTPLLSNERFHRCLIACSADLVLATHKTVIMMFPAVLESTGLTAFDLSKIIENFVRHEETLPRELKRHLNSLEEQLLESMAWEKGSSLYNSLIVARPSVASEINRLGLLAEPMPSLDDLVSRQNVRIEGLPATPSKKRAAGPDDNADPRSPKRSCNESRNTVVERNLQTPPPKQSHMVSTSLKAKCHPLQSTFASPTVCNPVGGNEKCADVTIHIFFSKILKLAAIRIRNLCERVQCVEQTERVYNVFKQILEQQTTLFFNRHIDQLILCCLYGVAKVCQLELTFREILNNYKREAQCKPEVFSSIYIGSTNRNGVLVSRHVGIITFYNEVFVPAAKPFLVSLISSGTHPEDKKNASGQIPGSPKPSPFPNLPDMSPKKVSASHNVYVSPLRQTKLDLLLSPSSRSFYACIGEGTHAYQSPSKDLAAINSRLNYNGRKVNSRLNFDMVSDSVVAGSLGQINGGSTSDPAAAFSPLSKKRETDT.

The segment at 275 to 476 (TPVTSAMTTA…EKGSSLYNSL (202 aa)) is domain A. The segment at 275 to 722 (TPVTSAMTTA…NEVFVPAAKP (448 aa)) is pocket; binds RPD3I and RBAP1. Positions 477-594 (IVARPSVASE…PVGGNEKCAD (118 aa)) are spacer. Positions 512 to 563 (EGLPATPSKKRAAGPDDNADPRSPKRSCNESRNTVVERNLQTPPPKQSHMVS) are disordered. Positions 530 to 540 (ADPRSPKRSCN) are enriched in basic and acidic residues. Residues 541–552 (ESRNTVVERNLQ) show a composition bias toward polar residues. The domain B stretch occupies residues 595–722 (VTIHIFFSKI…NEVFVPAAKP (128 aa)). Disordered stretches follow at residues 734–762 (PEDK…MSPK) and 843–867 (QING…ETDT).

This sequence belongs to the retinoblastoma protein (RB) family. Interacts with RPD3I, RBAP1, the Arabidopsis cyclin CYCD3-1, the mastrevirus replication-associated protein A (RepA) and the begomovirus replication-associated protein (Rep). In terms of tissue distribution, ubiquitous.

The protein localises to the nucleus. In terms of biological role, regulator of biological processes that recruits a histone deacetylase to control gene transcription. May play a role in the entry into mitosis, negatively regulating the cell proliferation. Formation of stable complexes with geminiviridae replication-associated proteins may create a cellular environment which favors viral DNA replication. The protein is Retinoblastoma-related protein 1 (RBR1) of Zea mays (Maize).